We begin with the raw amino-acid sequence, 63 residues long: Small ribosomal subunit protein bS21 (63 aa).

The segment covering 40-52 has biased composition (basic and acidic residues); that stretch reads KPSVKRKLKSEAA. Residues 40–63 form a disordered region; it reads KPSVKRKLKSEAARKRKNKRGRRY. Positions 53 to 63 are enriched in basic residues; that stretch reads RKRKNKRGRRY.

The protein belongs to the bacterial ribosomal protein bS21 family.

This Limosilactobacillus reuteri (strain DSM 20016) (Lactobacillus reuteri) protein is Small ribosomal subunit protein bS21.